The chain runs to 20 residues: Alanine aminotransferase 1 (20 aa).

N6-(pyridoxal phosphate)lysine is present on Lys-11. Lys-11 is a glycosylation site (N-linked (Glc) (glycation) lysine; in vitro).

The protein belongs to the class-I pyridoxal-phosphate-dependent aminotransferase family. Alanine aminotransferase subfamily. Homodimer. Pyridoxal 5'-phosphate serves as cofactor. Glycation of Lys-11 inactivates the enzyme.

It localises to the cytoplasm. The catalysed reaction is L-alanine + 2-oxoglutarate = pyruvate + L-glutamate. The protein operates within amino-acid degradation; L-alanine degradation via transaminase pathway; pyruvate from L-alanine: step 1/1. Its function is as follows. Catalyzes the reversible transamination between alanine and 2-oxoglutarate to form pyruvate and glutamate. Participates in cellular nitrogen metabolism and also in liver gluconeogenesis starting with precursors transported from skeletal muscles. The chain is Alanine aminotransferase 1 (GPT) from Sus scrofa (Pig).